The primary structure comprises 88 residues: MLEGAKSIGAGAATIASAGAAIGIGNVFSSLIHSVARNPSLAKQLFGYAILGFALSELIALFALMMAFLILFAFRFFSKKGKLAGAPV.

A run of 2 helical transmembrane segments spans residues 8–28 (IGAGAATIASAGAAIGIGNVF) and 45–72 (LFGYAILGFALSELIALFALMMAFLILF).

Belongs to the ATPase C chain family. As to quaternary structure, F-type ATPases have 2 components, CF(1) - the catalytic core - and CF(0) - the membrane proton channel. CF(1) has five subunits: alpha(3), beta(3), gamma(1), delta(1), epsilon(1). CF(0) has three main subunits: a, b and c.

It is found in the mitochondrion membrane. The catalysed reaction is ATP + H2O + 4 H(+)(in) = ADP + phosphate + 5 H(+)(out). Its function is as follows. This protein is one of the chains of the nonenzymatic membrane component (F0) of mitochondrial ATPase. The protein is ATP synthase subunit 9, mitochondrial (ATP9) of Beta vulgaris (Sugar beet).